We begin with the raw amino-acid sequence, 120 residues long: Immunogenic miracidial antigen 5D (120 aa).

The tract at residues 41 to 120 (HIDVGDEDYH…PKKYGSGYKH (80 aa)) is disordered. Over residues 45–66 (GDEDYHDGDDDVDYTDDVDDVD) the composition is skewed to acidic residues.

It belongs to the immunogenic miracidial antigen family.

This chain is Immunogenic miracidial antigen 5D (5D), found in Schistosoma japonicum (Blood fluke).